We begin with the raw amino-acid sequence, 120 residues long: ATP-dependent Clp protease adapter protein ClpS (120 aa).

A disordered region spans residues 1–27 (MHAPSEIRLTFNQDRPQSNEDDGSGLA).

The protein belongs to the ClpS family. Binds to the N-terminal domain of the chaperone ClpA.

Functionally, involved in the modulation of the specificity of the ClpAP-mediated ATP-dependent protein degradation. The chain is ATP-dependent Clp protease adapter protein ClpS from Pseudomonas putida (strain GB-1).